We begin with the raw amino-acid sequence, 279 residues long: Putative methyltransferase Jann_4284 (279 aa).

The protein is Putative methyltransferase Jann_4284 of Jannaschia sp. (strain CCS1).